The sequence spans 577 residues: MNIQALLSEKVRQAMIAAGAPADCEPQVRQSAKVQFGDYQANGMMAVAKKLGMAPRQLAEQVLTHLDLNGIASKVEIAGPGFINIFLDPAFLADHVQQALASDRLDVATPEKQTIVVDYSAPNVAKEMHVGHLRSTIIGDAAVRTLEFLGHKVIRANHVGDWGTQFGMLIAWLEKQQQENAGEMELADLEGFYRDAKKHYDEDEEFAERARNYVVKLQSGDEYFREMWRKLVDITMTQNQITYDRLNVTLTRDDVMGESLYNPMLLGIVADLKAKGLAVESEGATVVFLDEFKNKEGEPMGVIIQKKDGGYLYTTTDIACAKYRYETLHADRVLYYIDSRQHQHLMQAWAIVRKAGYVPESVPLEHHMFGMMLGKDGKPFKTRAGGTVKLADLLDEALERARRLVAEKNPDMPADELEKLANAVGIGAVKYADLSKNRTTDYIFDWDNMLAFEGNTAPYMQYAYTRVLSVFRKAEINEEQLAAAPVIIREDREAQLAARLLQFEETLTVVAREGTPHVMCAYLYDLAGLFSGFYEHCPILSAENEEVRNSRLKLAQLTAKTLKLGLDTLGIETVERM.

Positions 122-132 (PNVAKEMHVGH) match the 'HIGH' region motif.

The protein belongs to the class-I aminoacyl-tRNA synthetase family. Monomer.

It localises to the cytoplasm. It carries out the reaction tRNA(Arg) + L-arginine + ATP = L-arginyl-tRNA(Arg) + AMP + diphosphate. The sequence is that of Arginine--tRNA ligase from Escherichia coli O139:H28 (strain E24377A / ETEC).